The sequence spans 652 residues: DNA ligase (652 aa).

Residues 29–33 (DAEYD), 78–79 (SL), and Glu107 contribute to the NAD(+) site. Residue Lys109 is the N6-AMP-lysine intermediate of the active site. NAD(+)-binding residues include Arg130, Glu164, Lys278, and Lys302. Residues Cys395, Cys398, Cys413, and Cys418 each contribute to the Zn(2+) site. The BRCT domain occupies 577–652 (DENAALSGMT…IKDEAWLESL (76 aa)).

Belongs to the NAD-dependent DNA ligase family. LigA subfamily. The cofactor is Mg(2+). Requires Mn(2+) as cofactor.

The catalysed reaction is NAD(+) + (deoxyribonucleotide)n-3'-hydroxyl + 5'-phospho-(deoxyribonucleotide)m = (deoxyribonucleotide)n+m + AMP + beta-nicotinamide D-nucleotide.. In terms of biological role, DNA ligase that catalyzes the formation of phosphodiester linkages between 5'-phosphoryl and 3'-hydroxyl groups in double-stranded DNA using NAD as a coenzyme and as the energy source for the reaction. It is essential for DNA replication and repair of damaged DNA. The chain is DNA ligase from Streptococcus suis (strain 05ZYH33).